The following is a 1233-amino-acid chain: Glutamate receptor ionotropic, NMDA 2C (1233 aa).

The N-terminal stretch at 1–19 (MGGALGPALLLTSLFGAWA) is a signal peptide. Over 20–554 (GLGPGQGEQG…SAFLEPYSPA (535 aa)) the chain is Extracellular. Asn-70 and Asn-73 each carry an N-linked (GlcNAc...) asparagine glycan. Cys-82 and Cys-317 form a disulfide bridge. Residues Asn-337 and Asn-438 are each glycosylated (N-linked (GlcNAc...) asparagine). 2 disulfide bridges follow: Cys-426–Cys-453 and Cys-433–Cys-454. 3 residues coordinate L-glutamate: Ser-509, Thr-511, and Arg-516. Residue Asn-539 is glycosylated (N-linked (GlcNAc...) asparagine). The helical transmembrane segment at 555-575 (VWVMMFVMCLTVVAITVFMFE) threads the bilayer. Over 576–598 (YFSPVSYNQNLTRGKKSGGPAFT) the chain is Cytoplasmic. Residues 599-611 (IGKSVWLLWALVF) constitute an intramembrane region (discontinuously helical). Positions 601–620 (KSVWLLWALVFNNSVPIENP) are pore-forming. Topologically, residues 612–626 (NNSVPIENPRGTTSK) are cytoplasmic. The chain crosses the membrane as a helical span at residues 627-644 (IMVLVWAFFAVIFLASYT). Over 645 to 813 (ANLAAFMIQE…EVMSSKLDID (169 aa)) the chain is Extracellular. Residue Asn-685 is glycosylated (N-linked (GlcNAc...) asparagine). L-glutamate-binding residues include Ser-687, Thr-688, and Asp-729. Cys-743 and Cys-798 are joined by a disulfide. A helical membrane pass occupies residues 814–836 (NMAGVFYMLLVAMGLALLVFAWE). The Cytoplasmic segment spans residues 837-1233 (HLVYWKLRHS…RRISSLESEV (397 aa)). A phosphoserine mark is found at Ser-875, Ser-881, and Ser-912. Positions 920-994 (IENWGGGRRA…GPPLSDVSRV (75 aa)) are disordered. Pro residues-rich tracts occupy residues 929–956 (APPPSPCPTPRSGPSPCLPTPDPPPEPS) and 975–987 (PQPPGRPPTPGPP). Positions 1231–1233 (SEV) match the PDZ-binding motif.

Belongs to the glutamate-gated ion channel (TC 1.A.10.1) family. NR2C/GRIN2C subfamily. In terms of assembly, heterotetramer. Forms heterotetrameric channels composed of two GluN1/zeta subunits (GRIN1), and two identical GluN2/epsilon subunits (GRIN2A, GRIN2B, GRIN2C or GRIN2D) or GluN3 subunits (GRIN3A or GRIN3B) (in vitro). In vivo, the subunit composition may depend on the expression levels of the different subunits. Interacts with PDZ domains of PATJ and DLG4. Interacts (via PDZ-binding motif) with SNX27 (via PDZ domain); the interaction is required for recycling to the plasma membrane when endocytosed and prevent degradation in lysosomes. Mainly expressed in brain with predominant expression is in the cerebellum, also present in the hippocampus, amygdala, caudate nucleus, corpus callosum, subthalamic nuclei and thalamus. Detected in the heart, skeletal muscle and pancreas.

The protein localises to the cell membrane. The protein resides in the postsynaptic cell membrane. The enzyme catalyses Ca(2+)(in) = Ca(2+)(out). It catalyses the reaction Na(+)(in) = Na(+)(out). It carries out the reaction K(+)(in) = K(+)(out). Component of N-methyl-D-aspartate (NMDA) receptors (NMDARs) that function as heterotetrameric, ligand-gated cation channels with high calcium permeability and voltage-dependent block by Mg(2+). Participates in synaptic plasticity for learning and memory formation by contributing to the slow phase of excitatory postsynaptic current and long-term synaptic potentiation. Channel activation requires binding of the neurotransmitter L-glutamate to the GluN2 subunit, glycine or D-serine binding to the GluN1 subunit, plus membrane depolarization to eliminate channel inhibition by Mg(2+). NMDARs mediate simultaneously the potasium efflux and the influx of calcium and sodium. Each GluN2 subunit confers differential attributes to channel properties, including activation, deactivation and desensitization kinetics, pH sensitivity, Ca2(+) permeability, and binding to allosteric modulators. This is Glutamate receptor ionotropic, NMDA 2C from Homo sapiens (Human).